Here is a 378-residue protein sequence, read N- to C-terminus: tRNA (guanine(26)-N(2))-dimethyltransferase (378 aa).

The 371-residue stretch at 4 to 374 (KEVTEGKVRI…KGYEEIIRCV (371 aa)) folds into the Trm1 methyltransferase domain. 5 residues coordinate S-adenosyl-L-methionine: arginine 44, arginine 69, aspartate 87, aspartate 114, and alanine 115. 4 residues coordinate Zn(2+): cysteine 246, cysteine 249, cysteine 263, and cysteine 266.

Belongs to the class I-like SAM-binding methyltransferase superfamily. Trm1 family.

The enzyme catalyses guanosine(26) in tRNA + 2 S-adenosyl-L-methionine = N(2)-dimethylguanosine(26) in tRNA + 2 S-adenosyl-L-homocysteine + 2 H(+). In terms of biological role, dimethylates a single guanine residue at position 26 of a number of tRNAs using S-adenosyl-L-methionine as donor of the methyl groups. This chain is tRNA (guanine(26)-N(2))-dimethyltransferase, found in Saccharolobus islandicus (strain Y.G.57.14 / Yellowstone #1) (Sulfolobus islandicus).